Consider the following 99-residue polypeptide: Large ribosomal subunit protein bL25 (99 aa).

Belongs to the bacterial ribosomal protein bL25 family. As to quaternary structure, part of the 50S ribosomal subunit; part of the 5S rRNA/L5/L18/L25 subcomplex. Contacts the 5S rRNA. Binds to the 5S rRNA independently of L5 and L18.

Its function is as follows. This is one of the proteins that binds to the 5S RNA in the ribosome where it forms part of the central protuberance. The polypeptide is Large ribosomal subunit protein bL25 (Nostoc sp. (strain PCC 7120 / SAG 25.82 / UTEX 2576)).